We begin with the raw amino-acid sequence, 173 residues long: Photosystem I assembly protein Ycf3 (173 aa).

3 TPR repeats span residues 35–68 (AFAY…EEDP), 72–105 (SYIL…NPRM), and 113–146 (AVIY…WKRA).

It belongs to the Ycf3 family.

The protein resides in the cellular thylakoid membrane. Its function is as follows. Essential for the assembly of the photosystem I (PSI) complex. May act as a chaperone-like factor to guide the assembly of the PSI subunits. This Thermosynechococcus vestitus (strain NIES-2133 / IAM M-273 / BP-1) protein is Photosystem I assembly protein Ycf3.